The sequence spans 40 residues: Beta/delta-ctenitoxin-Pr1a (40 aa).

4 disulfide bridges follow: Cys-1/Cys-15, Cys-8/Cys-21, Cys-14/Cys-31, and Cys-23/Cys-29.

The protein belongs to the neurotoxin 03 (Tx2) family. 05 subfamily. In terms of tissue distribution, expressed by the venom gland.

It localises to the secreted. In terms of biological role, potent insecticidal toxin that binds to two distinct sites in insect sodium channels, with close affinity (Kd1=34.7 pM and Kd2=35.1 pM). Its association is rather fast (1.4 and 8.5 minutes, respectively for sites 1 and 2) and its dissociation is a slower process (5.4 and 32.8 minutes, respectively). On rat brain synaptosomes the toxin partially competes (~30%) with the beta-toxin CssIV, but does not compete with the alpha-toxin AaII, nor with the beta-toxin Ts VII. On cockroach nerve cord synaptosomes, the toxin does not compete with the anti-insect toxin LqqIT1, but it competes with the 'alpha-like' toxin BomIV (IC(50)=80 pM). In cockroach neurons, the toxin inhibits the inactivation of sodium channels and it shifts the sodium channel activation to hyperpolarizing potentials. Hence, it behaves like an 'alpha-like' toxin and binds preferentially to site 3 on the insect Nav channel, located on the domain IV. The toxin may also inhibit the N-methyl-D-aspartate (NMDA)-subtype of ionotropic glutamate receptor (GRIN). In vivo, the toxin causes excitatory effects on insects. The polypeptide is Beta/delta-ctenitoxin-Pr1a (Phoneutria reidyi (Brazilian Amazonian armed spider)).